Reading from the N-terminus, the 533-residue chain is CTP synthase (533 aa).

Residues 1–264 (MKYIFVTGGV…GKLVTEKLNL (264 aa)) are amidoligase domain. Residue serine 12 coordinates CTP. Serine 12 contacts UTP. Residues 13–18 (SLGKGI) and aspartate 70 contribute to the ATP site. Mg(2+) contacts are provided by aspartate 70 and glutamate 138. CTP contacts are provided by residues 145-147 (DIE), 185-190 (KTKPTQ), and lysine 221. Residues 185–190 (KTKPTQ) and lysine 221 contribute to the UTP site. 237-239 (KDA) lines the ATP pocket. The region spanning 289–533 (TIGIVGKYIE…HGLVKASIEK (245 aa)) is the Glutamine amidotransferase type-1 domain. Glycine 357 contacts L-glutamine. The active-site Nucleophile; for glutamine hydrolysis is the cysteine 384. Residues 385-388 (LGMQ), glutamate 407, and arginine 464 each bind L-glutamine. Active-site residues include histidine 509 and glutamate 511.

The protein belongs to the CTP synthase family. Homotetramer.

The catalysed reaction is UTP + L-glutamine + ATP + H2O = CTP + L-glutamate + ADP + phosphate + 2 H(+). The enzyme catalyses L-glutamine + H2O = L-glutamate + NH4(+). It catalyses the reaction UTP + NH4(+) + ATP = CTP + ADP + phosphate + 2 H(+). It functions in the pathway pyrimidine metabolism; CTP biosynthesis via de novo pathway; CTP from UDP: step 2/2. Allosterically activated by GTP, when glutamine is the substrate; GTP has no effect on the reaction when ammonia is the substrate. The allosteric effector GTP functions by stabilizing the protein conformation that binds the tetrahedral intermediate(s) formed during glutamine hydrolysis. Inhibited by the product CTP, via allosteric rather than competitive inhibition. Functionally, catalyzes the ATP-dependent amination of UTP to CTP with either L-glutamine or ammonia as the source of nitrogen. Regulates intracellular CTP levels through interactions with the four ribonucleotide triphosphates. The sequence is that of CTP synthase from Methanococcus maripaludis (strain DSM 14266 / JCM 13030 / NBRC 101832 / S2 / LL).